The following is a 266-amino-acid chain: MSLLFDPGFVILREDQSVKLFNIILVMSQVFGGLAVLLVTIWMSKFESGFAWNEDPDKEFNYHPTFMIMGMVFLFGEALLVYRVFRNERKKFSKTLHVILHSCVLVFMLMALKAVFDYHNLHKDPSGNPAPIVNLVSLHSWIGLSVVILYFAQYIVGFITYFFPGMPIPIRQLVMPFHQMFGVLIFIFVSITVAMGISERAAWKHTCWTKEGQMCAQQATSSFVGVFTFLYTVCVLLLVLNPRWKRQSLPEEEGLHHLTSSHSMSD.

The Cytoplasmic portion of the chain corresponds to 1-22 (MSLLFDPGFVILREDQSVKLFN). Residues 23-43 (IILVMSQVFGGLAVLLVTIWM) traverse the membrane as a helical segment. A Cytochrome b561 domain is found at 27–240 (MSQVFGGLAV…YTVCVLLLVL (214 aa)). Residues 44-61 (SKFESGFAWNEDPDKEFN) lie on the Vesicular side of the membrane. The helical transmembrane segment at 62-82 (YHPTFMIMGMVFLFGEALLVY) threads the bilayer. Residues His-63, Arg-83, and Lys-90 each contribute to the heme b site. Over 83 to 95 (RVFRNERKKFSKT) the chain is Cytoplasmic. Positions 90 and 94 each coordinate L-ascorbate. Residues 96 to 116 (LHVILHSCVLVFMLMALKAVF) form a helical membrane-spanning segment. Heme b contacts are provided by residues His-97, 134-137 (NLVS), and His-139. Over 117 to 141 (DYHNLHKDPSGNPAPIVNLVSLHSW) the chain is Vesicular. The chain crosses the membrane as a helical span at residues 142–162 (IGLSVVILYFAQYIVGFITYF). Residues 163-176 (FPGMPIPIRQLVMP) lie on the Cytoplasmic side of the membrane. Arg-171 contacts L-ascorbate. Residues 177–197 (FHQMFGVLIFIFVSITVAMGI) form a helical membrane-spanning segment. The heme b site is built by His-178 and Glu-199. Residues 198 to 219 (SERAAWKHTCWTKEGQMCAQQA) are Vesicular-facing. Residues 220–240 (TSSFVGVFTFLYTVCVLLLVL) traverse the membrane as a helical segment. Topologically, residues 241–266 (NPRWKRQSLPEEEGLHHLTSSHSMSD) are cytoplasmic. Lys-245 is a binding site for heme b.

Requires heme b as cofactor.

It is found in the membrane. The enzyme catalyses monodehydro-L-ascorbate radical(out) + L-ascorbate(in) = monodehydro-L-ascorbate radical(in) + L-ascorbate(out). In terms of biological role, putative transmembrane reductase that uses ascorbate as an electron donor in the cytoplasm and transfers electrons across membranes to reduce monodehydro-L-ascorbate radical in the lumen of secretory vesicles. The sequence is that of Putative transmembrane ascorbate-dependent reductase CYB561 homolog from Caenorhabditis elegans.